The primary structure comprises 334 residues: Heme A synthase (334 aa).

The next 5 membrane-spanning stretches (helical) occupy residues 6–26, 93–113, 119–139, 154–174, and 189–209; these read ITRW…IGGI, GRIT…QGVI, LPYI…WYMV, LAFH…QLIK, and LIFS…GALV. H253 lines the heme pocket. A run of 3 helical transmembrane segments spans residues 255-275, 282-302, and 305-325; these read LGGF…FKVK, IAYF…ITIV, and VPII…SIII. H313 contributes to the heme binding site.

It belongs to the COX15/CtaA family. Type 2 subfamily. Interacts with CtaB. The cofactor is heme b.

It localises to the cell membrane. The enzyme catalyses Fe(II)-heme o + 2 A + H2O = Fe(II)-heme a + 2 AH2. It participates in porphyrin-containing compound metabolism; heme A biosynthesis; heme A from heme O: step 1/1. Functionally, catalyzes the conversion of heme O to heme A by two successive hydroxylations of the methyl group at C8. The first hydroxylation forms heme I, the second hydroxylation results in an unstable dihydroxymethyl group, which spontaneously dehydrates, resulting in the formyl group of heme A. In Rickettsia prowazekii (strain Madrid E), this protein is Heme A synthase.